Reading from the N-terminus, the 465-residue chain is UDP-N-acetylmuramate--L-alanine ligase (465 aa).

115–121 lines the ATP pocket; it reads GTHGKTT.

The protein belongs to the MurCDEF family.

The protein localises to the cytoplasm. It catalyses the reaction UDP-N-acetyl-alpha-D-muramate + L-alanine + ATP = UDP-N-acetyl-alpha-D-muramoyl-L-alanine + ADP + phosphate + H(+). The protein operates within cell wall biogenesis; peptidoglycan biosynthesis. Its function is as follows. Cell wall formation. The protein is UDP-N-acetylmuramate--L-alanine ligase of Renibacterium salmoninarum (strain ATCC 33209 / DSM 20767 / JCM 11484 / NBRC 15589 / NCIMB 2235).